We begin with the raw amino-acid sequence, 449 residues long: Glucose-6-phosphate isomerase (449 aa).

Residue Thr-38 is modified to Phosphothreonine. The active-site Proton donor is Glu-290. Residues His-311 and Lys-425 contribute to the active site.

This sequence belongs to the GPI family.

The protein localises to the cytoplasm. It catalyses the reaction alpha-D-glucose 6-phosphate = beta-D-fructose 6-phosphate. Its pathway is carbohydrate biosynthesis; gluconeogenesis. It functions in the pathway carbohydrate degradation; glycolysis; D-glyceraldehyde 3-phosphate and glycerone phosphate from D-glucose: step 2/4. Functionally, catalyzes the reversible isomerization of glucose-6-phosphate to fructose-6-phosphate. In Geobacillus thermodenitrificans (strain NG80-2), this protein is Glucose-6-phosphate isomerase.